We begin with the raw amino-acid sequence, 552 residues long: Urocanate hydratase (552 aa).

NAD(+) is bound by residues 49-50, Gln127, 173-175, Asp193, 239-240, 260-264, 270-271, and Tyr319; these read GG, GMG, NA, QTSAH, and YI. Residue Cys407 is part of the active site. Residue Gly489 coordinates NAD(+).

It belongs to the urocanase family. NAD(+) serves as cofactor.

It is found in the cytoplasm. The enzyme catalyses 4-imidazolone-5-propanoate = trans-urocanate + H2O. It participates in amino-acid degradation; L-histidine degradation into L-glutamate; N-formimidoyl-L-glutamate from L-histidine: step 2/3. Its function is as follows. Catalyzes the conversion of urocanate to 4-imidazolone-5-propionate. The protein is Urocanate hydratase of Bacillus cereus (strain G9842).